A 222-amino-acid polypeptide reads, in one-letter code: Putative metal transport protein MJ1569 (222 aa).

6 helical membrane-spanning segments follow: residues 3–23 (IPDGYLGPITCAFFYLIMIPI), 39–59 (LPLLGVLTAFSFLVMMFNLPV), 81–101 (WVATIAISIVLIIQAIFFGDG), 102–122 (GITCIGANCFNMGVVLPFVGY), 135–155 (VIASGIGAYVGIVAAAIVAGF), and 180–200 (AFAHLITAGPAAAVVTAIVVW).

This sequence belongs to the CbiM family.

The protein localises to the cell membrane. In terms of biological role, may be involved in metal transport. The polypeptide is Putative metal transport protein MJ1569 (Methanocaldococcus jannaschii (strain ATCC 43067 / DSM 2661 / JAL-1 / JCM 10045 / NBRC 100440) (Methanococcus jannaschii)).